The following is a 479-amino-acid chain: UDP-glycosyltransferase 71B6 (479 aa).

Residues S275, 342–344 (AEQ), 359–367 (HGGWNSTLE), and 381–384 (YAEQ) contribute to the UDP-alpha-D-glucose site.

This sequence belongs to the UDP-glycosyltransferase family.

Glucosyltransferase that glucosylates the (+) enantiomer of abscisic acid ((+)-ABA). Is not active on structural analogs with alterations to the 8'- and 9'- methyl groups. The sequence is that of UDP-glycosyltransferase 71B6 (UGT71B6) from Arabidopsis thaliana (Mouse-ear cress).